A 344-amino-acid polypeptide reads, in one-letter code: Phosphoribosylformylglycinamidine cyclo-ligase (344 aa).

Belongs to the AIR synthase family.

The protein resides in the cytoplasm. It catalyses the reaction 2-formamido-N(1)-(5-O-phospho-beta-D-ribosyl)acetamidine + ATP = 5-amino-1-(5-phospho-beta-D-ribosyl)imidazole + ADP + phosphate + H(+). Its pathway is purine metabolism; IMP biosynthesis via de novo pathway; 5-amino-1-(5-phospho-D-ribosyl)imidazole from N(2)-formyl-N(1)-(5-phospho-D-ribosyl)glycinamide: step 2/2. In Neisseria meningitidis serogroup C / serotype 2a (strain ATCC 700532 / DSM 15464 / FAM18), this protein is Phosphoribosylformylglycinamidine cyclo-ligase.